Here is a 133-residue protein sequence, read N- to C-terminus: Nucleoside diphosphate kinase (133 aa).

Residues lysine 9, phenylalanine 57, arginine 85, threonine 91, arginine 102, and asparagine 112 each contribute to the ATP site. Histidine 115 acts as the Pros-phosphohistidine intermediate in catalysis.

This sequence belongs to the NDK family. Requires Mg(2+) as cofactor.

It is found in the cytoplasm. The catalysed reaction is a 2'-deoxyribonucleoside 5'-diphosphate + ATP = a 2'-deoxyribonucleoside 5'-triphosphate + ADP. It catalyses the reaction a ribonucleoside 5'-diphosphate + ATP = a ribonucleoside 5'-triphosphate + ADP. Its function is as follows. Major role in the synthesis of nucleoside triphosphates other than ATP. The ATP gamma phosphate is transferred to the NDP beta phosphate via a ping-pong mechanism, using a phosphorylated active-site intermediate. In Methanococcus maripaludis (strain DSM 14266 / JCM 13030 / NBRC 101832 / S2 / LL), this protein is Nucleoside diphosphate kinase.